Consider the following 379-residue polypeptide: tRNA-specific 2-thiouridylase MnmA (379 aa).

ATP-binding positions include 23 to 30 (AMSGGVDS) and L49. C117 acts as the Nucleophile in catalysis. C117 and C214 are oxidised to a cystine. Residue G141 participates in ATP binding. The segment at 163–165 (RDQ) is interaction with tRNA. C214 functions as the Cysteine persulfide intermediate in the catalytic mechanism.

It belongs to the MnmA/TRMU family.

The protein resides in the cytoplasm. The catalysed reaction is S-sulfanyl-L-cysteinyl-[protein] + uridine(34) in tRNA + AH2 + ATP = 2-thiouridine(34) in tRNA + L-cysteinyl-[protein] + A + AMP + diphosphate + H(+). In terms of biological role, catalyzes the 2-thiolation of uridine at the wobble position (U34) of tRNA, leading to the formation of s(2)U34. The polypeptide is tRNA-specific 2-thiouridylase MnmA (Cereibacter sphaeroides (strain ATCC 17029 / ATH 2.4.9) (Rhodobacter sphaeroides)).